The sequence spans 433 residues: KH domain-containing, RNA-binding, signal transduction-associated protein 1 (433 aa).

Residues 1-79 (MQRRDDSSAR…PLLPGGAVKM (79 aa)) form a disordered region. Positions 41–76 (GAQHPQPLLTGGAAAGSSGAQGPAAANPAPLLPGGA) are enriched in low complexity. The interval 82–243 (ENKYLPELMA…VKKFLVPDMM (162 aa)) is involved in homodimerization. Residues 171–197 (QEETGAKISVLGKGSMRDKAKEEELRK) enclose the KH domain. 3 disordered regions span residues 259–305 (GVPE…ALVR), 317–351 (AAVA…PPPP), and 403–433 (QDDW…YGRY). The span at 277–300 (APPPPPPVPRGRGVGPPPPPPPPR) shows a compositional bias: pro residues. The segment covering 329–342 (VRGAPAPRARAAGI) has biased composition (low complexity). Residues 424–433 (AYREHPYGRY) are compositionally biased toward basic and acidic residues.

Belongs to the KHDRBS family. As to quaternary structure, self-associates to form homooligomers when bound to RNA, oligomerization appears to be limited when binding to proteins. In terms of processing, tyrosine phosphorylated by several non-receptor tyrosine kinases including LCK, FYN and JAK3. Post-translationally, acetylated. Positively correlates with ability to bind RNA. Methylated by HRMT1L2. Required for nuclear localization.

The protein resides in the nucleus. It localises to the cytoplasm. It is found in the membrane. Functionally, recruited and tyrosine phosphorylated by several receptor systems, for example the T-cell, leptin and insulin receptors. Once phosphorylated, functions as an adapter protein in signal transduction cascades by binding to SH2 and SH3 domain-containing proteins. Role in G2-M progression in the cell cycle. Represses CBP-dependent transcriptional activation apparently by competing with other nuclear factors for binding to CBP. Also acts as a putative regulator of mRNA stability and/or translation rates and mediates mRNA nuclear export. Plays a role in the regulation of alternative splicing and influences mRNA splice site selection and exon inclusion. In Gallus gallus (Chicken), this protein is KH domain-containing, RNA-binding, signal transduction-associated protein 1.